The primary structure comprises 189 residues: Histidinol-phosphate aminotransferase (189 aa).

Belongs to the class-II pyridoxal-phosphate-dependent aminotransferase family. Histidinol-phosphate aminotransferase subfamily. Homodimer. Requires pyridoxal 5'-phosphate as cofactor.

It carries out the reaction L-histidinol phosphate + 2-oxoglutarate = 3-(imidazol-4-yl)-2-oxopropyl phosphate + L-glutamate. It functions in the pathway amino-acid biosynthesis; L-histidine biosynthesis; L-histidine from 5-phospho-alpha-D-ribose 1-diphosphate: step 7/9. This chain is Histidinol-phosphate aminotransferase (hisC), found in Thiocapsa roseopersicina.